Reading from the N-terminus, the 564-residue chain is Urease subunit alpha (564 aa).

The region spanning 126–564 is the Urease domain; sequence GGIDTHIHFI…LPMAQRYFLF (439 aa). Residues H131, H133, and K214 each contribute to the Ni(2+) site. Position 214 is an N6-carboxylysine (K214). Substrate is bound at residue H216. The Ni(2+) site is built by H243 and H269. The Proton donor role is filled by H317. Residue D357 coordinates Ni(2+).

The protein belongs to the metallo-dependent hydrolases superfamily. Urease alpha subunit family. As to quaternary structure, heterotrimer of UreA (gamma), UreB (beta) and UreC (alpha) subunits. Three heterotrimers associate to form the active enzyme. Ni cation is required as a cofactor. Carboxylation allows a single lysine to coordinate two nickel ions.

It localises to the cytoplasm. The catalysed reaction is urea + 2 H2O + H(+) = hydrogencarbonate + 2 NH4(+). Its pathway is nitrogen metabolism; urea degradation; CO(2) and NH(3) from urea (urease route): step 1/1. The sequence is that of Urease subunit alpha from Burkholderia thailandensis (strain ATCC 700388 / DSM 13276 / CCUG 48851 / CIP 106301 / E264).